The sequence spans 495 residues: MAGKLVSLVPPLLLAAAGLTGLLLLCVPTQDVREPPALKYGIVLDAGSSHTSMFVYKWPADKENDTGIVGQHSSCDVQGGGISSYANDPSKAGQSLVRCLEQALRDVPRDRHASTPLYLGATAGMRPFNLTSPEATARVLEAVTQTLTQYPFDFRGARILSGQDEGVFGWVTANYLLENFIKYGWVGRWIRPRKGTLGAMDLGGASTQITFETTSPSEDPGNEVHLRLYGQHYRVYTHSFLCYGRDQILLRLLASALQIHRFHPCWPKGYSTQVLLQEVYQSPCTMGQRPRAFNGSAIVSLSGTSNATLCRDLVSRLFNISSCPFSQCSFNGVFQPPVAGNFIAFSAFYYTVDFLTTVMGLPVGTLKQLEEATEITCNQTWTELQARVPGQKTRLADYCAVAMFIHQLLSRGYHFDERSFREVVFQKKAADTAVGWALGYMLNLTNLIPADLPGLRKGTHFSSWVALLLLFTVLILAALVLLLRQVRSAKSPGAL.

Over 1 to 4 (MAGK) the chain is Cytoplasmic. The helical transmembrane segment at 5–25 (LVSLVPPLLLAAAGLTGLLLL) threads the bilayer. The Extracellular portion of the chain corresponds to 26–462 (CVPTQDVREP…PGLRKGTHFS (437 aa)). Asn64 is a glycosylation site (N-linked (GlcNAc...) asparagine). Residues Cys75 and Cys99 are joined by a disulfide bond. An N-linked (GlcNAc...) asparagine glycan is attached at Asn129. Glu165 acts as the Proton acceptor in catalysis. 204-208 (GASTQ) is a binding site for ATP. Intrachain disulfides connect Cys242/Cys284 and Cys265/Cys310. N-linked (GlcNAc...) asparagine glycans are attached at residues Asn294, Asn306, and Asn319. Intrachain disulfides connect Cys323/Cys328 and Cys377/Cys399. 2 N-linked (GlcNAc...) asparagine glycosylation sites follow: Asn378 and Asn443. A helical membrane pass occupies residues 463–483 (SWVALLLLFTVLILAALVLLL). Over 484 to 495 (RQVRSAKSPGAL) the chain is Cytoplasmic.

Belongs to the GDA1/CD39 NTPase family. Ca(2+) serves as cofactor. The cofactor is Mg(2+). As to expression, expressed in brain, heart, vas deferens, kidney, skeletal muscle, thymus, lung and spleen. Weak expression in liver.

Its subcellular location is the cell membrane. In the nervous system, could hydrolyze ATP and other nucleotides to regulate purinergic neurotransmission. Hydrolyzes ADP only to a marginal extent. This Rattus norvegicus (Rat) protein is Ectonucleoside triphosphate diphosphohydrolase 2 (Entpd2).